The chain runs to 61 residues: uncharacterized protein (61 aa).

The segment at 39 to 61 is disordered; that stretch reads PRPFTPGLADPRRLGPRRVQAAQ.

This is an uncharacterized protein from Pan troglodytes (Chimpanzee).